Consider the following 207-residue polypeptide: dTTP/UTP pyrophosphatase (207 aa).

Catalysis depends on aspartate 79, which acts as the Proton acceptor.

Belongs to the Maf family. YhdE subfamily. It depends on a divalent metal cation as a cofactor.

The protein localises to the cytoplasm. The catalysed reaction is dTTP + H2O = dTMP + diphosphate + H(+). It carries out the reaction UTP + H2O = UMP + diphosphate + H(+). In terms of biological role, nucleoside triphosphate pyrophosphatase that hydrolyzes dTTP and UTP. May have a dual role in cell division arrest and in preventing the incorporation of modified nucleotides into cellular nucleic acids. This Rhodopseudomonas palustris (strain BisB5) protein is dTTP/UTP pyrophosphatase.